A 626-amino-acid chain; its full sequence is DNA primase (626 aa).

A CHC2-type zinc finger spans residues 39-63 (CPFHGEKTPSFSVSPEKQIFHCFGC). Residues 264-346 (EEITLMEGFM…DVFVLQLPAG (83 aa)) enclose the Toprim domain. Glutamate 270, aspartate 314, and aspartate 316 together coordinate Mg(2+).

It belongs to the DnaG primase family. Monomer. Interacts with DnaB. Zn(2+) serves as cofactor. Mg(2+) is required as a cofactor.

The enzyme catalyses ssDNA + n NTP = ssDNA/pppN(pN)n-1 hybrid + (n-1) diphosphate.. RNA polymerase that catalyzes the synthesis of short RNA molecules used as primers for DNA polymerase during DNA replication. The polypeptide is DNA primase (Listeria innocua serovar 6a (strain ATCC BAA-680 / CLIP 11262)).